Consider the following 314-residue polypeptide: Homoserine O-succinyltransferase (314 aa).

Cys142 acts as the Acyl-thioester intermediate in catalysis. Lys163 and Ser192 together coordinate substrate. His235 functions as the Proton acceptor in the catalytic mechanism. Glu237 is an active-site residue. Arg249 contributes to the substrate binding site.

This sequence belongs to the MetA family.

Its subcellular location is the cytoplasm. The catalysed reaction is L-homoserine + succinyl-CoA = O-succinyl-L-homoserine + CoA. It participates in amino-acid biosynthesis; L-methionine biosynthesis via de novo pathway; O-succinyl-L-homoserine from L-homoserine: step 1/1. Functionally, transfers a succinyl group from succinyl-CoA to L-homoserine, forming succinyl-L-homoserine. The sequence is that of Homoserine O-succinyltransferase from Shewanella woodyi (strain ATCC 51908 / MS32).